Consider the following 703-residue polypeptide: Zinc finger protein 750 (703 aa).

A CCHC-type zinc finger spans residues 25-51 (YKCFQCPFTCNEKSHLFNHMKYGLCKN). Residues Cys-27, Cys-30, His-43, and Cys-49 each contribute to the Zn(2+) site. Disordered stretches follow at residues 60-96 (DRVP…SGLS), 121-147 (GPHR…EAAV), 362-617 (PSKL…EQKQ), and 633-703 (NVEP…TRVS). A compositionally biased stretch (polar residues) spans 67 to 78 (KPNSSDPKQTNQ). Over residues 79–93 (PDPVVKPTSSKPVPS) the composition is skewed to low complexity. Residues 375–399 (TELEKQSPTPEAKEPSKDGQRDTEG) are compositionally biased toward basic and acidic residues. Positions 418 to 428 (SPTNFTQTSQP) are enriched in polar residues. The segment covering 583-592 (SSGDGPDPSS) has biased composition (low complexity). The segment covering 605 to 616 (QDIRAADSDEQK) has biased composition (basic and acidic residues).

It is found in the nucleus. Functionally, transcription factor involved in epidermis differentiation. Required for terminal epidermal differentiation: acts downstream of p63/TP63 and activates expression of late epidermal differentiation genes. Specifically binds to the promoter of KLF4 and promotes its expression. The sequence is that of Zinc finger protein 750 (ZNF750) from Bos taurus (Bovine).